A 704-amino-acid chain; its full sequence is MARQVGLDKVRNIGIMAHIDAGKTTTTERILYYTGRLHKMGEVHDGGATMDWMEQEKERGITITSAATTCFWEPRYGIYKGKNHRINIIDTPGHVDFTVEVERSLRVLDGAVALFCAVGGVEPQSETVWRQANKYNVPRVAYVNKMDRVGADFFETVKSIKERLGANPVPVQIPIGQGEMFAGVVDLIRMKGIIYDKEDGSTYEEVAIPHDLESEAKHWRINMLEAVSEVDETLLEKYLEGEDITEDEVRKVLRQATLAGTIIPTLCGSSFKNKGVQFMLDTVVECLPSPVDVGNVAGHHPDTDEDIVREPKDEAPFAGLAFKIATDPFVGKLTFFRVYSGVLKAGSYILNSTTGKKERIGRLLQMHSNKREDLTEVHAGDIAAAVGMKDVKTGDTMCDEAKPIILEKMVFPEPVIQIAIEPKTKADSDKLGMSLAKLAEEDPTFRVSSDEETGQTLIAGMGELHLEVLVDRLKREFKVEANVGQPQVAYRETIKKAVDHEGKFVRQSGGKGQFGLVNLKVEPLEQGKGYEFVDAIKGGVIPKEYIPAVSNGIQEAMKDGVIAGYPVQDVKVTLYDGKYHDVDSSEMAFKIAGSIGFKGAVRKADPVLLEPLMKVEVITPEEYLGDVMGDLSSRRGHIEGMGDRAGAQFVKAKVPLSEMFGYSTVLRSMTQGRANYTMEFEQYHEVPKNIAEALQEKNSAKNAD.

Residues 8 to 291 (DKVRNIGIMA…TVVECLPSPV (284 aa)) enclose the tr-type G domain. GTP contacts are provided by residues 17-24 (AHIDAGKT), 90-94 (DTPGH), and 144-147 (NKMD).

Belongs to the TRAFAC class translation factor GTPase superfamily. Classic translation factor GTPase family. EF-G/EF-2 subfamily.

It localises to the cytoplasm. Its function is as follows. Catalyzes the GTP-dependent ribosomal translocation step during translation elongation. During this step, the ribosome changes from the pre-translocational (PRE) to the post-translocational (POST) state as the newly formed A-site-bound peptidyl-tRNA and P-site-bound deacylated tRNA move to the P and E sites, respectively. Catalyzes the coordinated movement of the two tRNA molecules, the mRNA and conformational changes in the ribosome. This chain is Elongation factor G, found in Prosthecochloris aestuarii (strain DSM 271 / SK 413).